We begin with the raw amino-acid sequence, 105 residues long: MFRWRKGKCRGRKLRDIYISGLPAVRAMIPEPGTGKKPVAINLAEAEALRLVDYEEMSFDDAAAKMGVSKATVWRLVNAARKKMAKAVFEGRAILITKGGELERL.

The protein belongs to the UPF0251 family.

The chain is UPF0251 protein AF_0666 from Archaeoglobus fulgidus (strain ATCC 49558 / DSM 4304 / JCM 9628 / NBRC 100126 / VC-16).